Here is an 853-residue protein sequence, read N- to C-terminus: Thrombospondin type-1 domain-containing protein 1 (853 aa).

Residues 1 to 24 (MKPMLKDFSNLLLVVLCDYVLGEA) form the signal peptide. Residues 25-414 (EYLLLREPGH…QPQGPVKSNN (390 aa)) are Extracellular-facing. 7 N-linked (GlcNAc...) asparagine glycosylation sites follow: Asn39, Asn53, Asn58, Asn69, Asn80, Asn135, and Asn304. Residues 341–394 (IETWGLWQPWSQCSATCGDGVRERRRVCLTSFPSRPGCPGMSLEASLCSLEECA) enclose the TSP type-1 domain. 3 disulfides stabilise this stretch: Cys353/Cys388, Cys357/Cys393, and Cys368/Cys378. The chain crosses the membrane as a helical span at residues 415-435 (IVTVTGISLCLFIIIATVLIT). The Cytoplasmic segment spans residues 436–853 (LWRRFGRPAK…STLSVEKLVI (418 aa)). Disordered regions lie at residues 445-518 (KCST…ESFQ), 624-650 (TLIRKSQARHVGSRGGPSERSHARNAH), 668-702 (ERSMSTLTPRQAPAYSTRTRTCEQAEDRFRPQSRG), and 714-800 (QEAS…RKDK). Ser464 is subject to Phosphoserine. The segment covering 671–686 (MSTLTPRQAPAYSTRT) has biased composition (polar residues). Positions 687–697 (RTCEQAEDRFR) are enriched in basic and acidic residues. The segment covering 767–795 (SHKSVSRKQSSPTSPKDSYQRVSPLSPSQ) has biased composition (polar residues).

As to quaternary structure, part of a complex composed of THSD1, PTK2/FAK1, TLN1 and VCL. Interacts with TLN1.

The protein resides in the endosome membrane. Its subcellular location is the cell junction. It localises to the focal adhesion. In terms of biological role, is a positive regulator of nascent focal adhesion assembly, involved in the modulation of endothelial cell attachment to the extracellular matrix. This is Thrombospondin type-1 domain-containing protein 1 (THSD1) from Pongo abelii (Sumatran orangutan).